The primary structure comprises 228 residues: DNA-3-methyladenine glycosylase 1 (228 aa).

The active-site Proton acceptor is the Asp-170.

This sequence belongs to the alkylbase DNA glycosidase AlkA family.

The enzyme catalyses Hydrolysis of alkylated DNA, releasing 3-methyladenine, 3-methylguanine, 7-methylguanine and 7-methyladenine.. In terms of biological role, hydrolysis of the deoxyribose N-glycosidic bond to excise 3-methyladenine or 7-methyladenine from the damaged DNA polymer formed by alkylation lesions. Can release ethylated and propylated bases from DNA in addition to 3-methyladenine. This Schizosaccharomyces pombe (strain 972 / ATCC 24843) (Fission yeast) protein is DNA-3-methyladenine glycosylase 1 (mag1).